Reading from the N-terminus, the 498-residue chain is ATP synthase subunit beta, chloroplastic (498 aa).

172 to 179 (GGAGVGKT) contributes to the ATP binding site.

It belongs to the ATPase alpha/beta chains family. In terms of assembly, F-type ATPases have 2 components, CF(1) - the catalytic core - and CF(0) - the membrane proton channel. CF(1) has five subunits: alpha(3), beta(3), gamma(1), delta(1), epsilon(1). CF(0) has four main subunits: a(1), b(1), b'(1) and c(9-12).

The protein resides in the plastid. It localises to the chloroplast thylakoid membrane. It catalyses the reaction ATP + H2O + 4 H(+)(in) = ADP + phosphate + 5 H(+)(out). In terms of biological role, produces ATP from ADP in the presence of a proton gradient across the membrane. The catalytic sites are hosted primarily by the beta subunits. In Zea mays (Maize), this protein is ATP synthase subunit beta, chloroplastic.